Reading from the N-terminus, the 307-residue chain is MLATILDGNKISAEIKTEVAAEVAELKAKGLTPGLAVVLVGHNPASEIYVRNKVKACEMTGIYSEQHTPPDTVSTADLLQLVESLNRRNDIDGILVQLPLPKQVDSKKILLAVSPEKDVDGFHPMNVGYLSTVRPGLVPCTPAGCMEILRRSNVPVEGADAVVVGRSDIVGKPIAMLLTNANATVTICHSKTHDLPAVCRRADILVAAIGRPGMITPDFVKPGATVLDVGINKITDRAEFEKFFAGDAKREAAFAKNGSTLVGDCHPKVAEVAGAFTPVPGGVGPLTIAMLMANTVKAAKLRRGNTV.

NADP(+) contacts are provided by residues 165–167, S190, and I231; that span reads GRS.

It belongs to the tetrahydrofolate dehydrogenase/cyclohydrolase family. As to quaternary structure, homodimer.

The enzyme catalyses (6R)-5,10-methylene-5,6,7,8-tetrahydrofolate + NADP(+) = (6R)-5,10-methenyltetrahydrofolate + NADPH. The catalysed reaction is (6R)-5,10-methenyltetrahydrofolate + H2O = (6R)-10-formyltetrahydrofolate + H(+). Its pathway is one-carbon metabolism; tetrahydrofolate interconversion. Catalyzes the oxidation of 5,10-methylenetetrahydrofolate to 5,10-methenyltetrahydrofolate and then the hydrolysis of 5,10-methenyltetrahydrofolate to 10-formyltetrahydrofolate. This chain is Bifunctional protein FolD, found in Koribacter versatilis (strain Ellin345).